The following is a 421-amino-acid chain: CaM kinase-like vesicle-associated protein (421 aa).

The Protein kinase domain occupies 24–284 (YDLGQVVKSE…AQEAIAHEWI (261 aa)). The tract at residues 326–421 (ASEQGDTGAS…PQMLPQRKGY (96 aa)) is disordered. 2 stretches are compositionally biased toward low complexity: residues 330-340 (GDTGASGLAAG) and 390-406 (QQQA…QQAR).

Belongs to the protein kinase superfamily. CAMK Ser/Thr protein kinase family. In terms of assembly, interacts with calmodulin, in the presence of calcium. The cofactor is Ca(2+). In terms of tissue distribution, ubiquitously expressed.

Its subcellular location is the cytoplasmic vesicle membrane. Functionally, does not appear to have detectable kinase activity. In Takifugu rubripes (Japanese pufferfish), this protein is CaM kinase-like vesicle-associated protein (camkv).